The primary structure comprises 503 residues: Ell-associated factor Eaf (503 aa).

2 stretches are compositionally biased toward polar residues: residues 143–158 and 170–189; these read PGQQ…TNVA and ENST…SRRN. Disordered regions lie at residues 143-223 and 251-503; these read PGQQ…PAWD and NGSQ…EDDD. The residue at position 199 (S199) is a Phosphoserine. Over residues 251-264 the composition is skewed to polar residues; that stretch reads NGSQANTSGSSTGS. Positions 281–296 are enriched in basic residues; sequence GKQRQAPHHGHAKRQQ. The span at 297–311 shows a compositional bias: polar residues; that stretch reads RSSPPMVQQQPNFGR. Over residues 312-326 the composition is skewed to low complexity; the sequence is NSYNGGNNYAQQQQH. A compositionally biased stretch (acidic residues) spans 382–397; that stretch reads DSSDSDSGSDSDDSTE. Low complexity-rich tracts occupy residues 415–435 and 484–497; these read MHHQ…QQQH and NDLL…SSNS.

The protein belongs to the EAF family.

The protein localises to the nucleus. Its function is as follows. Promotes transcriptional elongation by Su(Tpl)/ELL. Essential for development. The chain is Ell-associated factor Eaf from Drosophila ananassae (Fruit fly).